Reading from the N-terminus, the 466-residue chain is DNA polymerase delta subunit 3 (466 aa).

The residue at position 2 (A2) is an N-acetylalanine. 2 disordered regions span residues 169-188 and 199-232; these read NNEL…VSQQ and KAAA…PGKG. Basic and acidic residues predominate over residues 206-217; it reads ETNKETKTEAKE. K258 participates in a covalent cross-link: Glycyl lysine isopeptide (Lys-Gly) (interchain with G-Cter in SUMO); alternate. Residue K258 forms a Glycyl lysine isopeptide (Lys-Gly) (interchain with G-Cter in SUMO2); alternate linkage. A Glycyl lysine isopeptide (Lys-Gly) (interchain with G-Cter in SUMO2) cross-link involves residue K261. Disordered regions lie at residues 274-393 and 406-466; these read KLAT…KTYL and ESES…FQRK. T277 bears the Phosphothreonine mark. Over residues 286–296 the composition is skewed to basic and acidic residues; the sequence is KKAEPVKVLQK. Residue S307 is modified to Phosphoserine. The span at 349–361 shows a compositional bias: pro residues; the sequence is PSPPPPPSPPLEP. Phosphoserine is present on residues S407 and S409. A Phosphothreonine modification is found at T411. A Phosphoserine modification is found at S413. Positions 432–441 are enriched in basic and acidic residues; sequence VKKEPREERK. A Glycyl lysine isopeptide (Lys-Gly) (interchain with G-Cter in SUMO); alternate cross-link involves residue K433. K433 is covalently cross-linked (Glycyl lysine isopeptide (Lys-Gly) (interchain with G-Cter in SUMO2); alternate). Residues 455–466 are compositionally biased toward polar residues; it reads RQVSITGFFQRK. Positions 456–463 match the PIP-box motif; that stretch reads QVSITGFF. Residue S458 is modified to Phosphoserine.

Component of both the DNA polymerase delta and DNA polymerase zeta complexes. The tetrameric DNA polymerase delta complex (Pol-delta4), which consists of POLD1/p125, POLD2/p50, POLD3/p66/p68 and POLD4/p12, with POLD1 bearing DNA polymerase and 3' to 5' proofreading exonuclease activities. Within this complex, directly interacts with POLD2. Following stress caused by DNA damaging agents or by replication stress, POLD4 is degraded and Pol-delta4 is converted into a trimeric form of the complex (Pol-delta3), which consists of POLD1, POLD2 and POLD3. Pol-delta3 is the major form occurring at S phase replication sites, as well as DNA damage sites. Directly interacts with PCNA, as do POLD1 and POLD4; this interaction stimulates Pol-delta polymerase activity. POLD3 phosphorylation at Ser-458 impairs PCNA binding. Component of the DNA polymerase zeta complex (POLZ), which consists of REV3L, MAD2L2, POLD2 and POLD3, with REV3L bearing DNA polymerase catalytic activity. The DNA polymerase delta complex interacts with POLDIP2; this interaction is probably mediated through direct binding to POLD2. In terms of processing, ubiquitinated, but not targeted to the proteasome. Sumoylated. Sumoylation with SUMO3 may be predominant. Phosphorylation at Ser-458 is catalyzed in vitro by PKA. It is thought to decrease the affinity for PCNA and Pol-delta4 processivity. Can also be phosphorylated in vitro by CDK1-cyclin-A complex, as well as CDK2-cyclin-A and CDK2-cyclin-E complexes. PCNA interferes with CDK-cyclin phosphorylation.

The protein resides in the cytoplasm. It localises to the nucleus. Its function is as follows. Accessory component of both the DNA polymerase delta complex and the DNA polymerase zeta complex. As a component of the trimeric and tetrameric DNA polymerase delta complexes (Pol-delta3 and Pol-delta4, respectively), plays a role in high fidelity genome replication, including in lagging strand synthesis, and repair. Required for optimal Pol-delta activity. Stabilizes the Pol-delta complex and plays a major role in Pol-delta stimulation by PCNA. Pol-delta3 and Pol-delta4 are characterized by the absence or the presence of POLD4. They exhibit differences in catalytic activity. Most notably, Pol-delta3 shows higher proofreading activity than Pol-delta4. Although both Pol-delta3 and Pol-delta4 process Okazaki fragments in vitro, Pol-delta3 may also be better suited to fulfill this task, exhibiting near-absence of strand displacement activity compared to Pol-delta4 and stalling on encounter with the 5'-blocking oligonucleotides. Pol-delta3 idling process may avoid the formation of a gap, while maintaining a nick that can be readily ligated. Along with DNA polymerase kappa, DNA polymerase delta carries out approximately half of nucleotide excision repair (NER) synthesis following UV irradiation. In this context, POLD3, along with PCNA and RFC1-replication factor C complex, is required to recruit POLD1, the catalytic subunit of the polymerase delta complex, to DNA damage sites. Under conditions of DNA replication stress, required for the repair of broken replication forks through break-induced replication (BIR). Involved in the translesion synthesis (TLS) of templates carrying O6-methylguanine or abasic sites performed by Pol-delta4, independently of DNA polymerase zeta (REV3L) or eta (POLH). Facilitates abasic site bypass by DNA polymerase delta by promoting extension from the nucleotide inserted opposite the lesion. Also involved in TLS, as a component of the tetrameric DNA polymerase zeta complex. Along with POLD2, dramatically increases the efficiency and processivity of DNA synthesis of the DNA polymerase zeta complex compared to the minimal zeta complex, consisting of only REV3L and REV7. This Homo sapiens (Human) protein is DNA polymerase delta subunit 3 (POLD3).